The primary structure comprises 99 residues: Large ribosomal subunit protein uL23 (99 aa).

This sequence belongs to the universal ribosomal protein uL23 family. As to quaternary structure, part of the 50S ribosomal subunit. Contacts protein L29, and trigger factor when it is bound to the ribosome.

Its function is as follows. One of the early assembly proteins it binds 23S rRNA. One of the proteins that surrounds the polypeptide exit tunnel on the outside of the ribosome. Forms the main docking site for trigger factor binding to the ribosome. This Pseudomonas savastanoi pv. phaseolicola (strain 1448A / Race 6) (Pseudomonas syringae pv. phaseolicola (strain 1448A / Race 6)) protein is Large ribosomal subunit protein uL23.